Reading from the N-terminus, the 181-residue chain is Acetylcholinesterase (181 aa).

Residue S76 is the Acyl-ester intermediate of the active site. The Charge relay system role is filled by E132. The tract at residues 162–181 is disordered; it reads WQDQDNGGLPLTGNPTXPHN.

The protein belongs to the type-B carboxylesterase/lipase family. Post-translationally, the N-terminus is blocked. As to expression, expressed by the venom gland. Is also probably expressed by liver and muscle.

It localises to the synapse. The protein resides in the secreted. It is found in the cell membrane. The catalysed reaction is acetylcholine + H2O = choline + acetate + H(+). In venom, its toxic role is unclear: it could result in less musculatory control by rapidly hydrolyzing acetylcholine, or that it works synergistically with alkaline phosphatase (ALP) in paralyzing prey through hypotension. In muscle, it terminates signal transduction at the neuromuscular junction by rapid hydrolysis of the acetylcholine released into the synaptic cleft. In liver, its function is unclear: it could serve as a safeguard against any diffusion of acetylcholine from synapses into the circulation. This is Acetylcholinesterase (ACHE) from Naja oxiana (Central Asian cobra).